The following is a 317-amino-acid chain: R-phycoerythrin gamma chain, chloroplastic (317 aa).

Residues 1-40 constitute a chloroplast transit peptide; sequence MASPAFAVNGMFTPVKLSGSFTASMPVDSKPAASATGVRM. Phycourobilin is bound by residues C94 and C133. C210 contacts (2R,3E)-phycoerythrobilin. C297 lines the phycourobilin pocket.

In terms of assembly, heteromer of 1 alpha, 1 beta and 2 gamma chains. Post-translationally, contains four covalently linked bilin chromophores.

It localises to the plastid. The protein resides in the chloroplast thylakoid membrane. Its function is as follows. Critical for the incorporation of phycoerythrin in the phycobilisome complex. This is R-phycoerythrin gamma chain, chloroplastic from Aglaothamnion neglectum (Red alga).